The primary structure comprises 1295 residues: DNA-directed RNA polymerase subunit beta' (1295 aa).

4 residues coordinate Zn(2+): C60, C62, C75, and C78. The Mg(2+) site is built by D516, D518, and D520. 4 residues coordinate Zn(2+): C841, C914, C921, and C924.

The protein belongs to the RNA polymerase beta' chain family. As to quaternary structure, the RNAP catalytic core consists of 2 alpha, 1 beta, 1 beta' and 1 omega subunit. When a sigma factor is associated with the core the holoenzyme is formed, which can initiate transcription. It depends on Mg(2+) as a cofactor. Requires Zn(2+) as cofactor.

It catalyses the reaction RNA(n) + a ribonucleoside 5'-triphosphate = RNA(n+1) + diphosphate. DNA-dependent RNA polymerase catalyzes the transcription of DNA into RNA using the four ribonucleoside triphosphates as substrates. The chain is DNA-directed RNA polymerase subunit beta' from Dehalococcoides mccartyi (strain CBDB1).